The chain runs to 327 residues: Sphingomyelin synthase-related 2 (327 aa).

5 consecutive transmembrane segments (helical) span residues 54–74 (LLAT…LAWV), 99–119 (AIRI…LVMF), 131–151 (VFFC…IFQV), 192–212 (LCGD…FLVF), and 220–240 (LQPL…SILL). Residue histidine 201 is part of the active site. The Cytoplasmic segment spans residues 241 to 327 (ARKHYMIDIV…TLKKSRRSFE (87 aa)). Residues histidine 244 and aspartate 248 contribute to the active site.

The protein belongs to the sphingomyelin synthase family.

It is found in the membrane. This Caenorhabditis elegans protein is Sphingomyelin synthase-related 2.